A 215-amino-acid polypeptide reads, in one-letter code: Pyridoxine/pyridoxamine 5'-phosphate oxidase (215 aa).

Substrate is bound by residues Arg-9–Tyr-12 and Lys-69. FMN-binding positions include Arg-64–Lys-69, Phe-79–Thr-80, Lys-86, and Gln-108. 3 residues coordinate substrate: Tyr-126, Arg-130, and Ser-134. FMN-binding positions include Gln-143–Ser-144 and Trp-188. Residue Arg-194–His-196 coordinates substrate. Position 198 (Arg-198) interacts with FMN.

It belongs to the pyridoxamine 5'-phosphate oxidase family. Homodimer. FMN serves as cofactor.

It catalyses the reaction pyridoxamine 5'-phosphate + O2 + H2O = pyridoxal 5'-phosphate + H2O2 + NH4(+). The enzyme catalyses pyridoxine 5'-phosphate + O2 = pyridoxal 5'-phosphate + H2O2. It participates in cofactor metabolism; pyridoxal 5'-phosphate salvage; pyridoxal 5'-phosphate from pyridoxamine 5'-phosphate: step 1/1. Its pathway is cofactor metabolism; pyridoxal 5'-phosphate salvage; pyridoxal 5'-phosphate from pyridoxine 5'-phosphate: step 1/1. Its function is as follows. Catalyzes the oxidation of either pyridoxine 5'-phosphate (PNP) or pyridoxamine 5'-phosphate (PMP) into pyridoxal 5'-phosphate (PLP). This Pseudomonas fluorescens (strain ATCC BAA-477 / NRRL B-23932 / Pf-5) protein is Pyridoxine/pyridoxamine 5'-phosphate oxidase.